The primary structure comprises 80 residues: Large ribosomal subunit protein uL24 (80 aa).

Belongs to the universal ribosomal protein uL24 family. As to quaternary structure, part of the 50S ribosomal subunit.

Functionally, one of two assembly initiator proteins, it binds directly to the 5'-end of the 23S rRNA, where it nucleates assembly of the 50S subunit. Its function is as follows. One of the proteins that surrounds the polypeptide exit tunnel on the outside of the subunit. The protein is Large ribosomal subunit protein uL24 of Chlorobium phaeobacteroides (strain BS1).